We begin with the raw amino-acid sequence, 219 residues long: Small ribosomal subunit protein uS3 (219 aa).

The 69-residue stretch at 38-106 (IREYINVRLK…RVHINILEVK (69 aa)) folds into the KH type-2 domain.

This sequence belongs to the universal ribosomal protein uS3 family. As to quaternary structure, part of the 30S ribosomal subunit. Forms a tight complex with proteins S10 and S14.

Functionally, binds the lower part of the 30S subunit head. Binds mRNA in the 70S ribosome, positioning it for translation. In Bacillus thuringiensis (strain Al Hakam), this protein is Small ribosomal subunit protein uS3.